The chain runs to 156 residues: Small ribosomal subunit protein uS7 (156 aa).

The protein belongs to the universal ribosomal protein uS7 family. As to quaternary structure, part of the 30S ribosomal subunit. Contacts proteins S9 and S11.

Functionally, one of the primary rRNA binding proteins, it binds directly to 16S rRNA where it nucleates assembly of the head domain of the 30S subunit. Is located at the subunit interface close to the decoding center, probably blocks exit of the E-site tRNA. This is Small ribosomal subunit protein uS7 from Ligilactobacillus salivarius (strain UCC118) (Lactobacillus salivarius).